The primary structure comprises 211 residues: Dual specificity phosphatase 29 (211 aa).

The Tyrosine-protein phosphatase domain occupies 47–192 (HVNEVWPGIY…LRTLDIQLAI (146 aa)). Position 136–143 (136–143 (HCAMGRSR)) interacts with substrate. Cys-137 acts as the Phosphocysteine intermediate in catalysis.

It belongs to the protein-tyrosine phosphatase family. Non-receptor class dual specificity subfamily.

Its subcellular location is the cytoplasm. It localises to the nucleus. The catalysed reaction is O-phospho-L-tyrosyl-[protein] + H2O = L-tyrosyl-[protein] + phosphate. It catalyses the reaction O-phospho-L-seryl-[protein] + H2O = L-seryl-[protein] + phosphate. The enzyme catalyses O-phospho-L-threonyl-[protein] + H2O = L-threonyl-[protein] + phosphate. Functionally, dual specificity phosphatase able to dephosphorylate phosphotyrosine, phosphoserine and phosphothreonine residues within the same substrate, with a preference for phosphotyrosine as a substrate. Involved in the modulation of AMPK and MAPK1/2 signaling pathways. This is Dual specificity phosphatase 29 (dusp29) from Callorhinchus milii (Ghost shark).